Here is a 136-residue protein sequence, read N- to C-terminus: Probable disulfide formation protein (136 aa).

A helical transmembrane segment spans residues 7–26; sequence SYALYFAWAISCAGTLISIF. Cys36 and Cys39 are oxidised to a cystine. The next 2 helical transmembrane spans lie at 41-60 and 67-84; these read YQRI…AYRE and YILP…YQVF. Cys96 and Cys101 are disulfide-bonded. A helical transmembrane segment spans residues 109 to 131; it reads SYVTIPMASVVAFGAIVCLLVLT.

This sequence belongs to the DsbB family. BdbC subfamily.

Its subcellular location is the cell inner membrane. Required for disulfide bond formation in some proteins. In Chlamydia pneumoniae (Chlamydophila pneumoniae), this protein is Probable disulfide formation protein.